We begin with the raw amino-acid sequence, 337 residues long: Cholinesterase 2 (337 aa).

Residue S99 is the Acyl-ester intermediate of the active site. Cysteines 153 and 165 form a disulfide. E224 (charge relay system) is an active-site residue. The N-linked (GlcNAc...) asparagine glycan is linked to N290.

Belongs to the type-B carboxylesterase/lipase family.

The catalysed reaction is an acylcholine + H2O = a carboxylate + choline + H(+). The sequence is that of Cholinesterase 2 (CHE2) from Branchiostoma lanceolatum (Common lancelet).